We begin with the raw amino-acid sequence, 105 residues long: Protein LITTLE ZIPPER 2 (105 aa).

The tract at residues 1-20 (MCLTTSEPPFPDTDTPTMRS) is disordered. Positions 39–60 (NLTRRRRLLKEQKEMEMRNLKL) form a coiled coil.

In terms of assembly, interacts with REV.

In terms of biological role, competitive inhibitor of the HD-ZIPIII transcription factors in shoot apical meristem (SAM) development. Acts by forming non-functional heterodimers. Part of a negative feedback loop. Essential for proper functioning of stem cells in the SAM. This chain is Protein LITTLE ZIPPER 2, found in Arabidopsis thaliana (Mouse-ear cress).